The sequence spans 1304 residues: Splicing factor 3B subunit 1 (1304 aa).

Disordered stretches follow at residues 100-119 (QYDPFAEHRPPKIADREDEY) and 124-148 (RTMIISPERLDPFADGGKTPDPKMN). Basic and acidic residues predominate over residues 104–119 (FAEHRPPKIADREDEY). Phosphothreonine is present on Thr125. Ser129 is modified (phosphoserine). Residue Lys141 is modified to N6-acetyllysine. At Thr142 the chain carries Phosphothreonine. Arg157 carries the post-translational modification Citrulline. The segment at 173-360 (AEKAKAGELK…PVLTPGKTPI (188 aa)) is disordered. Positions 190–342 (SQPPSKRKRR…KRKSRWDETP (153 aa)) are U2AF homology region; mediates interaction with RBM39. Ser194 bears the Phosphoserine mark. Thr203, Thr207, and Thr211 each carry phosphothreonine. Position 214 is an N6-acetyllysine; alternate (Lys214). A Glycyl lysine isopeptide (Lys-Gly) (interchain with G-Cter in SUMO2); alternate cross-link involves residue Lys214. Residues Thr223 and Thr227 each carry the phosphothreonine modification. The interval 223-491 (TPGHTPSLRW…VDESTLSPEE (269 aa)) is interaction with PPP1R8. Position 229 is a phosphoserine (Ser229). Residues 231–241 (RWDETPGRAKG) show a composition bias toward basic and acidic residues. Phosphothreonine is present on residues Thr235, Thr244, Thr248, Thr257, Thr261, Thr267, Thr273, and Thr278. Ser287 bears the Phosphoserine mark. Over residues 291 to 304 (NRWDETPKTERDTP) the composition is skewed to basic and acidic residues. Thr296, Thr299, Thr303, and Thr313 each carry phosphothreonine. At Ser322 the chain carries Phosphoserine. Phosphothreonine occurs at positions 326 and 328. Position 332 is a phosphoserine (Ser332). Phosphothreonine is present on Thr341. The span at 342 to 352 (PASQMGGSTPV) shows a compositional bias: polar residues. Ser344 and Ser349 each carry phosphoserine. Phosphothreonine occurs at positions 350 and 354. Position 400 is a phosphoserine (Ser400). A Glycyl lysine isopeptide (Lys-Gly) (interchain with G-Cter in SUMO2); alternate cross-link involves residue Lys413. Residue Lys413 forms a Glycyl lysine isopeptide (Lys-Gly) (interchain with G-Cter in SUMO1); alternate linkage. Thr426 is modified (phosphothreonine). Lys430 participates in a covalent cross-link: Glycyl lysine isopeptide (Lys-Gly) (interchain with G-Cter in SUMO2). The residue at position 434 (Thr434) is a Phosphothreonine; by DYRK1A. The residue at position 436 (Thr436) is a Phosphothreonine. Ser488 is modified (phosphoserine). HEAT repeat units follow at residues 529–568 (GPLFNQILPLLMSPTLEDQERHLLVKVIDRILYKLDDLVR), 569–603 (PYVHKILVVIEPLLIDEDYYARVEGREIISNLAKA), 604–641 (AGLATMISTMRPDIDNMDEYVRNTTARAFAVVASALGI), 643–677 (SLLPFLKAVCKSKKSWQARHTGIKIVQQIAILMGC), 680–718 (LPHLRSLVEIIEHGLVDEQQKVRTISALAIAALAEAATP), 763–801 (NYYTREVMLILIREFQSPDEEMKKIVLKVVKQCCGTDGV), 843–881 (KVGAAEIISRIVDDLKDEAEQYRKMVMETIEKIMGNLGA), 1010–1048 (TPPIKDLLPRLTPILKNRHEKVQENCIDLVGRIADRGAE), 1052–1090 (AREWMRICFELLELLKAHKKAIRRATVNTFGYIAKAIGP), 1122–1160 (TCSPFTVLPALMNEYRVPELNVQNGVLKSLSFLFEYIGE), and 1163–1201 (KDYIYAVTPLLEDALMDRDLVHRQTASAVVQHMSLGVYG). Positions 529 to 568 (GPLFNQILPLLMSPTLEDQERHLLVKVIDRILYKLDDLVR) are interaction with SF3B14. The segment at 547 to 550 (QERH) is interaction with PHF5A. 2 positions are modified to N6-acetyllysine: Lys554 and Lys562. The interaction with PHF5A stretch occupies residues 1156–1157 (EY). Residues 1248-1304 (QYCLQGLFHPARKVRDVYWKIYNSIYIGSQDALIAHYPRIYNDDKNTYIRYELDYIL) form an interaction with SF3B3 and SF3B5 region.

Belongs to the SF3B1 family. In terms of assembly, component of the 17S U2 SnRNP complex, a ribonucleoprotein complex that contains small nuclear RNA (snRNA) U2 and a number of specific proteins. Part of the SF3B subcomplex of the 17S U2 SnRNP complex. SF3B associates with the splicing subcomplex SF3A and a 12S RNA unit to form the U2 small nuclear ribonucleoproteins complex (U2 snRNP). Within the SF3B complex, interacts directly (via HEAT domain) with SF3B3, SF3B5, SF3B6 and (via HEAT domain) with PHF5A. The SF3B subcomplex interacts with U2AF2. Identified in the spliceosome C complex. Component of the minor (U12-type spliceosome) spliceosome. Within the minor spliceosome complex, interacts with SCNM1 and CRIPT. Component of the B-WICH complex, at least composed of SMARCA5/SNF2H, BAZ1B/WSTF, SF3B1, DEK, MYO1C, ERCC6, MYBBP1A and DDX21. Phosphorylated form interacts with PPP1R8. Interacts with PQBP1. Interacts with RBM17. Interacts with RBM39. Interacts with SETX. Interacts with RBM15. Interacts with USH1G. Interacts with SDE2. Interacts with U2AF1. Interacts with CACTIN. Interacts with ZRSR1. Interacts with CYREN. Post-translationally, phosphorylated. Phosphorylation occurs concomitantly with the splicing catalytic steps. Phosphorylation on Thr-244, Thr-248 and Thr-313 by cyclin-dependent kinases promotes interaction with PPP1R8 during mitosis. Citrullinated by PADI4.

Its subcellular location is the nucleus. The protein resides in the nucleus speckle. In terms of biological role, component of the 17S U2 SnRNP complex of the spliceosome, a large ribonucleoprotein complex that removes introns from transcribed pre-mRNAs. The 17S U2 SnRNP complex (1) directly participates in early spliceosome assembly and (2) mediates recognition of the intron branch site during pre-mRNA splicing by promoting the selection of the pre-mRNA branch-site adenosine, the nucleophile for the first step of splicing. Within the 17S U2 SnRNP complex, SF3B1 is part of the SF3B subcomplex, which is required for 'A' complex assembly formed by the stable binding of U2 snRNP to the branchpoint sequence in pre-mRNA. Sequence independent binding of SF3A and SF3B subcomplexes upstream of the branch site is essential, it may anchor U2 snRNP to the pre-mRNA. May also be involved in the assembly of the 'E' complex. Also acts as a component of the minor spliceosome, which is involved in the splicing of U12-type introns in pre-mRNAs. Together with other U2 snRNP complex components may also play a role in the selective processing of microRNAs (miRNAs) from the long primary miRNA transcript, pri-miR-17-92. This chain is Splicing factor 3B subunit 1, found in Homo sapiens (Human).